Consider the following 102-residue polypeptide: Trans-acting regulatory protein HvrA (102 aa).

The DNA-binding element occupies 80–85 (RGRKPK).

Belongs to the histone-like protein H-NS family. In terms of assembly, homodimer that oligomerizes on DNA into higher-order complexes that form bridges between disparate regions of DNA compacting it.

Its subcellular location is the cytoplasm. It is found in the nucleoid. A dim-light trans-acting activator of Puf and Puh expression, that has no effect on the expression of the Puc operon. Responsible for regulating light-harvesting-I and reaction center structural gene expression differentially from that of light-harvesting-II expression in response to alterations in light. Proper light regulation of light-harvesting and reaction center polypeptide synthesis is an important physiological trait that enables cells to adapt to ever-changing environmental conditions of light intensity. In Rhodobacter capsulatus (Rhodopseudomonas capsulata), this protein is Trans-acting regulatory protein HvrA (hvrA).